We begin with the raw amino-acid sequence, 337 residues long: Ketol-acid reductoisomerase (NADP(+)) (337 aa).

A KARI N-terminal Rossmann domain is found at 3 to 183 (VEMFYDADAD…GGARAGVIKT (181 aa)). NADP(+) is bound by residues 26–29 (YGSQ), Lys49, Ser52, Ser54, and 84–87 (DTAQ). Residue His109 is part of the active site. Gly135 lines the NADP(+) pocket. The KARI C-terminal knotted domain maps to 184-329 (TFKEETETDL…KKLRDLMSWV (146 aa)). Residues Asp192, Glu196, Glu228, and Glu232 each coordinate Mg(2+). Substrate is bound at residue Ser253.

Belongs to the ketol-acid reductoisomerase family. It depends on Mg(2+) as a cofactor.

It carries out the reaction (2R)-2,3-dihydroxy-3-methylbutanoate + NADP(+) = (2S)-2-acetolactate + NADPH + H(+). The catalysed reaction is (2R,3R)-2,3-dihydroxy-3-methylpentanoate + NADP(+) = (S)-2-ethyl-2-hydroxy-3-oxobutanoate + NADPH + H(+). It participates in amino-acid biosynthesis; L-isoleucine biosynthesis; L-isoleucine from 2-oxobutanoate: step 2/4. It functions in the pathway amino-acid biosynthesis; L-valine biosynthesis; L-valine from pyruvate: step 2/4. Functionally, involved in the biosynthesis of branched-chain amino acids (BCAA). Catalyzes an alkyl-migration followed by a ketol-acid reduction of (S)-2-acetolactate (S2AL) to yield (R)-2,3-dihydroxy-isovalerate. In the isomerase reaction, S2AL is rearranged via a Mg-dependent methyl migration to produce 3-hydroxy-3-methyl-2-ketobutyrate (HMKB). In the reductase reaction, this 2-ketoacid undergoes a metal-dependent reduction by NADPH to yield (R)-2,3-dihydroxy-isovalerate. The sequence is that of Ketol-acid reductoisomerase (NADP(+)) from Mycolicibacterium vanbaalenii (strain DSM 7251 / JCM 13017 / BCRC 16820 / KCTC 9966 / NRRL B-24157 / PYR-1) (Mycobacterium vanbaalenii).